Reading from the N-terminus, the 422-residue chain is 5'-deoxyadenosine deaminase (422 aa).

Residues histidine 57 and histidine 59 each coordinate Zn(2+). The substrate site is built by glutamate 86 and histidine 178. Histidine 205 contributes to the Zn(2+) binding site. 2 residues coordinate substrate: glutamate 208 and aspartate 294. Aspartate 294 serves as a coordination point for Zn(2+).

It belongs to the metallo-dependent hydrolases superfamily. MTA/SAH deaminase family. As to quaternary structure, homotetramer. Requires Zn(2+) as cofactor.

It catalyses the reaction 5'-deoxyadenosine + H2O + H(+) = 5'-deoxyinosine + NH4(+). The enzyme catalyses S-adenosyl-L-homocysteine + H2O + H(+) = S-inosyl-L-homocysteine + NH4(+). The catalysed reaction is S-methyl-5'-thioadenosine + H2O + H(+) = S-methyl-5'-thioinosine + NH4(+). It carries out the reaction adenosine + H2O + H(+) = inosine + NH4(+). Its pathway is amino-acid biosynthesis; S-adenosyl-L-methionine biosynthesis. Catalyzes the deamination of three SAM-derived enzymatic products, namely 5'-deoxyadenosine, S-adenosyl-L-homocysteine, and 5'-methylthioadenosine, to produce the inosine analogs. Can also deaminate adenosine. The preferred substrate for this enzyme is 5'-deoxyadenosine, but all these substrates are efficiently deaminated. Likely functions in a S-adenosyl-L-methionine (SAM) recycling pathway from S-adenosyl-L-homocysteine (SAH) produced from SAM-dependent methylation reactions. May also be involved in the recycling of 5'-deoxyadenosine, whereupon the 5'-deoxyribose moiety of 5'-deoxyinosine is further metabolized to deoxyhexoses used for the biosynthesis of aromatic amino acids in methanogens. The chain is 5'-deoxyadenosine deaminase from Methanococcus maripaludis (strain DSM 14266 / JCM 13030 / NBRC 101832 / S2 / LL).